Consider the following 342-residue polypeptide: Ferredoxin--NADP reductase (342 aa).

FAD is bound by residues C17, D36, Q44, Y49, I89, F124, D289, and T330.

Belongs to the ferredoxin--NADP reductase type 2 family. As to quaternary structure, homodimer. FAD serves as cofactor.

It catalyses the reaction 2 reduced [2Fe-2S]-[ferredoxin] + NADP(+) + H(+) = 2 oxidized [2Fe-2S]-[ferredoxin] + NADPH. This Rhodopseudomonas palustris (strain BisA53) protein is Ferredoxin--NADP reductase.